The following is a 176-amino-acid chain: Mitochondrial inner membrane protein Mpv17 (176 aa).

Helical transmembrane passes span 18-38 (VQVL…QQLV), 53-73 (TMVS…YKVL), 94-114 (GGFA…LNGM), and 131-151 (LITN…LVPL).

Belongs to the peroxisomal membrane protein PXMP2/4 family. As to expression, high levels in heart, kidney, and brain, intermediate levels in testis, and low levels in liver and spleen.

It is found in the mitochondrion inner membrane. Its function is as follows. Non-selective channel that modulates the membrane potential under normal conditions and oxidative stress, and is involved in mitochondrial homeostasis. Involved in mitochondrial deoxynucleoside triphosphates (dNTP) pool homeostasis and mitochondrial DNA (mtDNA) maintenance. May be involved in the regulation of reactive oxygen species metabolism and the control of oxidative phosphorylation. The polypeptide is Mitochondrial inner membrane protein Mpv17 (Mus musculus (Mouse)).